We begin with the raw amino-acid sequence, 287 residues long: Acetylglutamate kinase (287 aa).

Substrate contacts are provided by residues 64–65, R86, and N185; that span reads GG.

This sequence belongs to the acetylglutamate kinase family. ArgB subfamily.

The protein resides in the cytoplasm. The catalysed reaction is N-acetyl-L-glutamate + ATP = N-acetyl-L-glutamyl 5-phosphate + ADP. It participates in amino-acid biosynthesis; L-arginine biosynthesis; N(2)-acetyl-L-ornithine from L-glutamate: step 2/4. Catalyzes the ATP-dependent phosphorylation of N-acetyl-L-glutamate. The chain is Acetylglutamate kinase from Hydrogenobaculum sp. (strain Y04AAS1).